Reading from the N-terminus, the 460-residue chain is Wadjet protein JetA (460 aa).

In terms of biological role, component of antiplasmid transformation system Wadjet type I, composed of JetA, JetB, JetC and JetD. Expression of Wadjet type I in B.subtilis (strain BEST7003) reduces the transformation efficiency of plasmid pHCMC05. This Bacillus cereus (strain Q1) protein is Wadjet protein JetA.